A 629-amino-acid chain; its full sequence is tRNA uridine 5-carboxymethylaminomethyl modification enzyme MnmG (629 aa).

Residues 13–18 (GGGHAG), Val-125, and Ser-180 contribute to the FAD site. An NAD(+)-binding site is contributed by 273–287 (GPRYCPSIEDKVMRF). Residue Gln-370 participates in FAD binding.

Belongs to the MnmG family. As to quaternary structure, homodimer. Heterotetramer of two MnmE and two MnmG subunits. It depends on FAD as a cofactor.

It is found in the cytoplasm. In terms of biological role, NAD-binding protein involved in the addition of a carboxymethylaminomethyl (cmnm) group at the wobble position (U34) of certain tRNAs, forming tRNA-cmnm(5)s(2)U34. The protein is tRNA uridine 5-carboxymethylaminomethyl modification enzyme MnmG of Salmonella schwarzengrund (strain CVM19633).